The following is an 89-amino-acid chain: Class I hydrophobin D (89 aa).

A signal peptide spans 1-16; sequence MKFSLATIALAAAVVA. Intrachain disulfides connect cysteine 28–cysteine 68, cysteine 39–cysteine 60, cysteine 40–cysteine 52, and cysteine 69–cysteine 85. Residue asparagine 36 is glycosylated (N-linked (GlcNAc...) asparagine).

Belongs to the fungal hydrophobin family.

It is found in the secreted. It localises to the cell wall. The protein resides in the vacuole. Its subcellular location is the cytoplasmic vesicle. Its function is as follows. Aerial growth, conidiation, and dispersal of filamentous fungi in the environment rely upon a capability of their secreting small amphipathic proteins called hydrophobins (HPBs) with low sequence identity. Class I can self-assemble into an outermost layer of rodlet bundles on aerial cell surfaces, conferring cellular hydrophobicity that supports fungal growth, development and dispersal; whereas Class II form highly ordered films at water-air interfaces through intermolecular interactions but contribute nothing to the rodlet structure. Hyd1D contributes to certain cell wall-related features, such as hydrophobicity but is not involved in cell wall-related events during fungal proliferation in host hemocoel. Does not contribute to conidial hydrophobicity. Involved in insect hemocoel colonization independent of cell hydrophobicity. This Beauveria bassiana (strain ARSEF 2860) (White muscardine disease fungus) protein is Class I hydrophobin D.